We begin with the raw amino-acid sequence, 403 residues long: MSDASEKLAQSVLSRSVGIVEPKTARFSEPLALDCGRSLPSYELVYETYGQLNDEGSNAVLICHALSGDHHAAGFHAETDRKPGWWDSAIGPGKPIDTDRFFVVCLNNLGGCKGSTGPLSVDPASGKPYGPDFPIVTVKDWVHAQYRLMQYLGLSGWAAVIGGSLGGMQVLQWSITYPDAVAHAVVIAAAPRLSAQNIAFNEVARQAIITDPEFYGGRYADHNALPRRGLMLARMLGHITYLSDDAMRAKFGRELRAGQVQYGFDVEFQVESYLRYQGTSFVDRFDANTYLLMTKALDYFDPAQASNDDLVAALAEVKAHFLVVSFTSDWRFSPERSREIVRALLASGKQVSYAEIESNHGHDAFLMTIPYYHRVLAGYMANIDFASTPRGVSSPVYSTGGAV.

An AB hydrolase-1 domain is found at 58 to 366 (NAVLICHALS…ESNHGHDAFL (309 aa)). Ser-164 serves as the catalytic Nucleophile. Arg-234 is a substrate binding site. Residues Asp-329 and His-362 contribute to the active site. Asp-363 is a binding site for substrate.

This sequence belongs to the AB hydrolase superfamily. MetX family. As to quaternary structure, homodimer.

The protein resides in the cytoplasm. The catalysed reaction is L-homoserine + succinyl-CoA = O-succinyl-L-homoserine + CoA. It participates in amino-acid biosynthesis; L-methionine biosynthesis via de novo pathway; O-succinyl-L-homoserine from L-homoserine: step 1/1. Functionally, transfers a succinyl group from succinyl-CoA to L-homoserine, forming succinyl-L-homoserine. The polypeptide is Homoserine O-succinyltransferase (Halothiobacillus neapolitanus (strain ATCC 23641 / c2) (Thiobacillus neapolitanus)).